A 219-amino-acid polypeptide reads, in one-letter code: Ribonuclease T (219 aa).

One can recognise an Exonuclease domain in the interval 20–194 (VVIDIETAGF…YDSLQTANLF (175 aa)). Mg(2+) is bound by residues D23, E25, H181, and D186. H181 serves as the catalytic Proton donor/acceptor.

Belongs to the RNase T family. In terms of assembly, homodimer. Requires Mg(2+) as cofactor.

Functionally, trims short 3' overhangs of a variety of RNA species, leaving a one or two nucleotide 3' overhang. Responsible for the end-turnover of tRNA: specifically removes the terminal AMP residue from uncharged tRNA (tRNA-C-C-A). Also appears to be involved in tRNA biosynthesis. The chain is Ribonuclease T from Buchnera aphidicola subsp. Schizaphis graminum (strain Sg).